We begin with the raw amino-acid sequence, 386 residues long: ADP,ATP carrier protein 1, mitochondrial (386 aa).

The N-terminal 76 residues, 1 to 76, are a transit peptide targeting the mitochondrion; the sequence is MDQVQHPSVM…PSTASAICVQ (76 aa). Solcar repeat units follow at residues 84-177, 189-281, and 289-375; these read SSFA…FKRL, KWFA…LKPV, and DSFF…LQLI. 5 helical membrane-spanning segments follow: residues 86 to 113, 154 to 178, 187 to 207, 257 to 278, and 292 to 312; these read FAID…VKLL, TANV…KRLF, YWKW…SSLL, FNIS…YDSL, and FASF…SYPI. The ADP site is built by Arg159 and Lys171. Arg316 contacts ADP. Residues 316-321 form an important for transport activity region; sequence RRRMMM. The Nucleotide carrier signature motif motif lies at 316–321; the sequence is RRRMMM. Residues 352 to 372 form a helical membrane-spanning segment; that stretch reads AGSNILRAIAGAGVLAGYDKL.

This sequence belongs to the mitochondrial carrier (TC 2.A.29) family. Monomer.

Its subcellular location is the mitochondrion inner membrane. The enzyme catalyses ADP(in) + ATP(out) = ADP(out) + ATP(in). With respect to regulation, the matrix-open state (m-state) is inhibited by the membrane-permeable bongkrekic acid (BKA). The cytoplasmic-open state (c-state) is inhibited by the membrane-impermeable toxic inhibitor carboxyatractyloside (CATR). Its function is as follows. ADP:ATP antiporter that mediates import of ADP into the mitochondrial matrix for ATP synthesis, and export of ATP out to fuel the cell. Cycles between the cytoplasmic-open state (c-state) and the matrix-open state (m-state): operates by the alternating access mechanism with a single substrate-binding site intermittently exposed to either the cytosolic (c-state) or matrix (m-state) side of the inner mitochondrial membrane. The polypeptide is ADP,ATP carrier protein 1, mitochondrial (ANT1) (Gossypium hirsutum (Upland cotton)).